Reading from the N-terminus, the 416-residue chain is Ferrochelatase, mitochondrial (416 aa).

A mitochondrion-targeting transit peptide spans 1–47; sequence MAAALRSAGVLLRDRLLYGGSRACQPRRCQSGAATAAAATETAQRAR. The segment at 41–62 is disordered; that stretch reads ETAQRARSPKPQAQPGNRKPRT. At K50 the chain carries N6-acetyllysine. Positions 108, 116, and 123 each coordinate protoporphyrin IX. N6-succinyllysine is present on K131. C189 provides a ligand contact to [2Fe-2S] cluster. Residue H223 is part of the active site. K283 is modified (N6-acetyllysine; alternate). An N6-succinyllysine; alternate modification is found at K283. The active site involves D376. [2Fe-2S] cluster-binding residues include C396, C399, and C404. The residue at position 408 (K408) is an N6-acetyllysine; alternate. K408 bears the N6-succinyllysine; alternate mark.

It belongs to the ferrochelatase family. Homodimer. Homotetramer. Interaction with PGRMC1; the interaction results in decreased FECH activity. Interacts with ABCB10 and SLC25A37; this interaction forms an oligomeric complex. Forms a complex with ABCB7 and ABCB10, where a dimeric FECH bridges ABCB7 and ABCB10 homodimers; this complex may be required for cellular iron homeostasis, mitochondrial function and heme biosynthesis. Interacts with ABCB7 and ABCB10. Requires [2Fe-2S] cluster as cofactor.

The protein resides in the mitochondrion inner membrane. It carries out the reaction heme b + 2 H(+) = protoporphyrin IX + Fe(2+). Its pathway is porphyrin-containing compound metabolism; protoheme biosynthesis; protoheme from protoporphyrin-IX: step 1/1. In terms of biological role, catalyzes the ferrous insertion into protoporphyrin IX and participates in the terminal step in the heme biosynthetic pathway. The polypeptide is Ferrochelatase, mitochondrial (Bos taurus (Bovine)).